Reading from the N-terminus, the 292-residue chain is MNDLSCPAIAFPFFLDPVIIRLGPIALHWYGLGYVVGILFAWWYAQKLLKKHSLWNTNHPPMDKEKIGDFVVWSAISVVVGGRLGQVLVWDLAYYFNHPSAIIAVWDGGMSFHGGFIGIIIAMIWFARKNNINIRAMFDIVAAGAPIGIGIVRICNFINQELWGNITTLPWAICFPLDPYYLPRHPSQLYEAFMEGFLLFIILFIIIFAFKALKRPGTVAGTFMIGYAIARSISEVYRAPQEDPEWFSTLFHSTGFTYGMALSLPMLFFGIYLLLQAFKHKSTENGHPKRKN.

6 consecutive transmembrane segments (helical) span residues 25 to 45 (IALHWYGLGYVVGILFAWWYA), 70 to 90 (FVVWSAISVVVGGRLGQVLVW), 101 to 121 (AIIAVWDGGMSFHGGFIGIII), 138 to 158 (FDIVAAGAPIGIGIVRICNFI), 193 to 213 (FMEGFLLFIILFIIIFAFKAL), and 255 to 275 (GFTYGMALSLPMLFFGIYLLL). A 1,2-diacyl-sn-glycero-3-phospho-(1'-sn-glycerol) is bound at residue arginine 153.

Belongs to the Lgt family.

Its subcellular location is the cell inner membrane. It catalyses the reaction L-cysteinyl-[prolipoprotein] + a 1,2-diacyl-sn-glycero-3-phospho-(1'-sn-glycerol) = an S-1,2-diacyl-sn-glyceryl-L-cysteinyl-[prolipoprotein] + sn-glycerol 1-phosphate + H(+). It participates in protein modification; lipoprotein biosynthesis (diacylglyceryl transfer). Catalyzes the transfer of the diacylglyceryl group from phosphatidylglycerol to the sulfhydryl group of the N-terminal cysteine of a prolipoprotein, the first step in the formation of mature lipoproteins. The chain is Phosphatidylglycerol--prolipoprotein diacylglyceryl transferase from Bartonella quintana (strain Toulouse) (Rochalimaea quintana).